Here is a 206-residue protein sequence, read N- to C-terminus: Holliday junction branch migration complex subunit RuvA (206 aa).

Residues 1 to 64 (MIGRLRGNLL…EDAQLLYGFN (64 aa)) form a domain I region. A domain II region spans residues 65–143 (TKKERALFRE…GWGAGDLFTP (79 aa)). The tract at residues 144 to 157 (ADTTSMDDASDLIS) is flexible linker. The domain III stretch occupies residues 158-206 (SPQSAQDEAVSALISLGYKPVQASKMVSQVAKPDMTSESLIRESLKSMI).

The protein belongs to the RuvA family. Homotetramer. Forms an RuvA(8)-RuvB(12)-Holliday junction (HJ) complex. HJ DNA is sandwiched between 2 RuvA tetramers; dsDNA enters through RuvA and exits via RuvB. An RuvB hexamer assembles on each DNA strand where it exits the tetramer. Each RuvB hexamer is contacted by two RuvA subunits (via domain III) on 2 adjacent RuvB subunits; this complex drives branch migration. In the full resolvosome a probable DNA-RuvA(4)-RuvB(12)-RuvC(2) complex forms which resolves the HJ.

It is found in the cytoplasm. The RuvA-RuvB-RuvC complex processes Holliday junction (HJ) DNA during genetic recombination and DNA repair, while the RuvA-RuvB complex plays an important role in the rescue of blocked DNA replication forks via replication fork reversal (RFR). RuvA specifically binds to HJ cruciform DNA, conferring on it an open structure. The RuvB hexamer acts as an ATP-dependent pump, pulling dsDNA into and through the RuvAB complex. HJ branch migration allows RuvC to scan DNA until it finds its consensus sequence, where it cleaves and resolves the cruciform DNA. The polypeptide is Holliday junction branch migration complex subunit RuvA (Aliivibrio salmonicida (strain LFI1238) (Vibrio salmonicida (strain LFI1238))).